The primary structure comprises 708 residues: Polyribonucleotide nucleotidyltransferase (708 aa).

Asp485 and Asp491 together coordinate Mg(2+). Residues 552-611 (PKTYIMSIPPDKIRDVIGSGGKVINKIIAETGVKIDIKEDGKIFVMSEDSEGAKKALKII) form the KH domain. In terms of domain architecture, S1 motif spans 621-689 (GEIYLGKVTK…NQGRINLSRK (69 aa)). The segment at 689 to 708 (KDAIKDSEKKEQNEKDVQKK) is disordered.

It belongs to the polyribonucleotide nucleotidyltransferase family. Requires Mg(2+) as cofactor.

Its subcellular location is the cytoplasm. The catalysed reaction is RNA(n+1) + phosphate = RNA(n) + a ribonucleoside 5'-diphosphate. Involved in mRNA degradation. Catalyzes the phosphorolysis of single-stranded polyribonucleotides processively in the 3'- to 5'-direction. The polypeptide is Polyribonucleotide nucleotidyltransferase (Clostridium kluyveri (strain NBRC 12016)).